The sequence spans 640 residues: Chaperone protein DnaK (640 aa).

Thr199 bears the Phosphothreonine; by autocatalysis mark. Positions 603 to 640 (YAAGETESSAAEPGEPQEKTVDAEVVDAEFEEVKDDKK) are disordered. The span at 626 to 640 (EVVDAEFEEVKDDKK) shows a compositional bias: acidic residues.

The protein belongs to the heat shock protein 70 family.

In terms of biological role, acts as a chaperone. The protein is Chaperone protein DnaK of Methylobacillus flagellatus (strain ATCC 51484 / DSM 6875 / VKM B-1610 / KT).